Reading from the N-terminus, the 382-residue chain is MQLDRLTLRDFRNITEAELRFGPGLNLITGPNGHGKSNLLEAIGLLATGRSFRRAPAAALRRYGQPWFHLRGETTARDLGHRLEFFGQAGRQAVKINGKSASAASALGQALAAVIVTPDTLRLVQDGPGVRRGFVDWVAFTCGRQQGALSHAVVAGDYQKALKARNRLLKLPRVEAGEWLAWESQLATLGAKMARNRYQVLQRLQPHLDRMLEDLGMAQRLTITLSCQLDRHGTHWAEDESAAASLYRRLLAENRASERRSGGTAIGPHRDDLVLRLDGHALAQFGSQGQQKRAALALKLAEAQLLQEQLGEWPLFVLDDPAAELDTDGMSRLMGLLARCGGQIFVASCRAQTIPWSGLAPQRFYVDQGVFALTEEIPLESL.

Position 30–37 (30–37 (GPNGHGKS)) interacts with ATP.

It belongs to the RecF family.

It localises to the cytoplasm. Its function is as follows. The RecF protein is involved in DNA metabolism; it is required for DNA replication and normal SOS inducibility. RecF binds preferentially to single-stranded, linear DNA. It also seems to bind ATP. This Magnetococcus marinus (strain ATCC BAA-1437 / JCM 17883 / MC-1) protein is DNA replication and repair protein RecF.